The following is a 260-amino-acid chain: Acetylglutamate kinase (260 aa).

Substrate-binding positions include 46 to 47 (GG), Arg-68, and Asn-160.

This sequence belongs to the acetylglutamate kinase family. ArgB subfamily.

The protein resides in the cytoplasm. It carries out the reaction N-acetyl-L-glutamate + ATP = N-acetyl-L-glutamyl 5-phosphate + ADP. The protein operates within amino-acid biosynthesis; L-arginine biosynthesis; N(2)-acetyl-L-ornithine from L-glutamate: step 2/4. In terms of biological role, catalyzes the ATP-dependent phosphorylation of N-acetyl-L-glutamate. This is Acetylglutamate kinase from Shewanella sp. (strain ANA-3).